The primary structure comprises 173 residues: NADH-ubiquinone oxidoreductase chain 6 (173 aa).

5 helical membrane-spanning segments follow: residues 1–21 (MTYFMLFLGLCFVLGGLGVAS), 27–47 (YGVVGLVLASVVGCGWLLSLG), 48–68 (VSFVSLVLFMVYLGGMLVVFV), 87–107 (VVGYGVSFIAVLVVGVVIGGL), and 139–159 (CGVGMFLVAGWGLLLTLFVVL).

The protein belongs to the complex I subunit 6 family.

The protein resides in the mitochondrion membrane. It carries out the reaction a ubiquinone + NADH + 5 H(+)(in) = a ubiquinol + NAD(+) + 4 H(+)(out). In terms of biological role, core subunit of the mitochondrial membrane respiratory chain NADH dehydrogenase (Complex I) that is believed to belong to the minimal assembly required for catalysis. Complex I functions in the transfer of electrons from NADH to the respiratory chain. The immediate electron acceptor for the enzyme is believed to be ubiquinone. This is NADH-ubiquinone oxidoreductase chain 6 (MT-ND6) from Synthliboramphus hypoleucus (Guadalupe murrelet).